The following is a 350-amino-acid chain: MVRIIPMAASSIRPSLACFSDSPRFPISLLSRNLSRTLHVPQSQLFGLTSHKLLRRSVNCLGVAESGKAAQATTQDDLLTWVKNDKRRMLHVVYRVGDMDRTIKFYTECLGMKLLRKRDIPEEKYTNAFLGYGPEDSHFVIELTYNYGVDKYDIGAGFGHFGIAVDDVAKTVELVKAKGGKVSREPGPVKGGKTVIAFIEDPDGYKFELLERGPTPEPLCQVMLRVGDLDRAIKFYEKAFGMELLRTRDNPEYKYTIAMMGYGPEDKFPVLELTYNYGVTEYDKGNAYAQIAIGTDDVYKTAEAIKLFGGKITREPGPLPGISTKITACLDPDGWKSVFVDNIDFLKELE.

The transit peptide at 1–61 directs the protein to the chloroplast; the sequence is MVRIIPMAAS…KLLRRSVNCL (61 aa). VOC domains lie at 88–212 and 218–342; these read RMLH…LLER and PLCQ…FVDN. His-91 lines the Zn(2+) pocket. Residue Arg-95 participates in substrate binding. Residue Glu-142 coordinates Zn(2+). 2 residues coordinate substrate: Asn-146 and His-160. His-160 and Glu-208 together coordinate Zn(2+). Catalysis depends on Glu-208, which acts as the Proton donor/acceptor.

This sequence belongs to the glyoxalase I family. Zn(2+) is required as a cofactor.

It is found in the plastid. The protein localises to the chloroplast stroma. The catalysed reaction is (R)-S-lactoylglutathione = methylglyoxal + glutathione. It functions in the pathway secondary metabolite metabolism; methylglyoxal degradation; (R)-lactate from methylglyoxal: step 1/2. Its function is as follows. Catalyzes the conversion of hemimercaptal, formed from methylglyoxal and glutathione, to S-lactoylglutathione. In Arabidopsis thaliana (Mouse-ear cress), this protein is Probable lactoylglutathione lyase, chloroplastic.